The sequence spans 93 residues: Integration host factor subunit beta (93 aa).

The protein belongs to the bacterial histone-like protein family. Heterodimer of an alpha and a beta chain.

In terms of biological role, this protein is one of the two subunits of integration host factor, a specific DNA-binding protein that functions in genetic recombination as well as in transcriptional and translational control. The protein is Integration host factor subunit beta (ihfB) of Mannheimia haemolytica (Pasteurella haemolytica).